The sequence spans 321 residues: Ferredoxin--NADP reductase (321 aa).

Residues Glu-33, Gln-41, Tyr-46, Val-86, Leu-119, Asp-277, and Ser-318 each contribute to the FAD site.

Belongs to the ferredoxin--NADP reductase type 2 family. In terms of assembly, homodimer. FAD serves as cofactor.

It carries out the reaction 2 reduced [2Fe-2S]-[ferredoxin] + NADP(+) + H(+) = 2 oxidized [2Fe-2S]-[ferredoxin] + NADPH. This is Ferredoxin--NADP reductase from Lactococcus lactis subsp. lactis (strain IL1403) (Streptococcus lactis).